Consider the following 406-residue polypeptide: Succinylornithine transaminase (406 aa).

N6-(pyridoxal phosphate)lysine is present on Lys252.

This sequence belongs to the class-III pyridoxal-phosphate-dependent aminotransferase family. AstC subfamily. Pyridoxal 5'-phosphate serves as cofactor.

It carries out the reaction N(2)-succinyl-L-ornithine + 2-oxoglutarate = N-succinyl-L-glutamate 5-semialdehyde + L-glutamate. It functions in the pathway amino-acid degradation; L-arginine degradation via AST pathway; L-glutamate and succinate from L-arginine: step 3/5. Its function is as follows. Catalyzes the transamination of N(2)-succinylornithine and alpha-ketoglutarate into N(2)-succinylglutamate semialdehyde and glutamate. Can also act as an acetylornithine aminotransferase. The sequence is that of Succinylornithine transaminase from Escherichia coli O45:K1 (strain S88 / ExPEC).